A 481-amino-acid chain; its full sequence is 3-isopropylmalate dehydratase large subunit (481 aa).

Residues Cys-357, Cys-417, and Cys-420 each contribute to the [4Fe-4S] cluster site.

This sequence belongs to the aconitase/IPM isomerase family. LeuC type 1 subfamily. In terms of assembly, heterodimer of LeuC and LeuD. The cofactor is [4Fe-4S] cluster.

It carries out the reaction (2R,3S)-3-isopropylmalate = (2S)-2-isopropylmalate. It functions in the pathway amino-acid biosynthesis; L-leucine biosynthesis; L-leucine from 3-methyl-2-oxobutanoate: step 2/4. Its function is as follows. Catalyzes the isomerization between 2-isopropylmalate and 3-isopropylmalate, via the formation of 2-isopropylmaleate. The polypeptide is 3-isopropylmalate dehydratase large subunit (Maricaulis maris (strain MCS10) (Caulobacter maris)).